We begin with the raw amino-acid sequence, 131 residues long: UPF0344 protein Sca_0577 (131 aa).

4 helical membrane passes run 1-21 (MLHL…VSYI), 42-62 (LFLV…FATA), 69-89 (LLTL…VTLV), and 99-119 (GLFW…IILP).

Belongs to the UPF0344 family.

The protein resides in the cell membrane. This chain is UPF0344 protein Sca_0577, found in Staphylococcus carnosus (strain TM300).